A 198-amino-acid chain; its full sequence is Putative peptidyl-prolyl cis-trans isomerase (198 aa).

In terms of domain architecture, PPIase cyclophilin-type spans 14 to 195 (NEIKVAMHTN…HDVVIESIDV (182 aa)).

The protein belongs to the cyclophilin-type PPIase family.

The enzyme catalyses [protein]-peptidylproline (omega=180) = [protein]-peptidylproline (omega=0). Functionally, PPIases accelerate the folding of proteins. It catalyzes the cis-trans isomerization of proline imidic peptide bonds in oligopeptides. This Staphylococcus haemolyticus (strain JCSC1435) protein is Putative peptidyl-prolyl cis-trans isomerase.